A 224-amino-acid polypeptide reads, in one-letter code: Zinc finger protein 22 (224 aa).

The tract at residues 1–34 (MRLAKPKAGISRSSSQGKAYENKRKTGRQRQKWG) is disordered. An N6-acetyllysine mark is found at Lys18 and Lys23. The residue at position 49 (Ser49) is a Phosphoserine. C2H2-type zinc fingers lie at residues 55–77 (YKCT…QKIH), 83–105 (HKCA…RRIH), 111–133 (YKCD…QRIH), 139–161 (YQCD…QRTH), and 167–189 (YQCS…MKVH).

The protein belongs to the krueppel C2H2-type zinc-finger protein family. In the embryo, expressed in developing craniofacial structures including dental epithelium of maxillary molar tooth organs, tongue epithelium and muscle, and craniofacial bone osteoblasts. In the adult, expressed in mesoderm-derived tissues such as skeletal muscle, heart, kidney and liver. Intermediate expression in spleen, thymus and brain. Low levels in endoderm-derived tissues such as intestine and colon.

Its subcellular location is the nucleus. In terms of biological role, binds DNA through the consensus sequence 5'-CAATG-3'. May be involved in transcriptional regulation and may play a role in tooth formation. This Homo sapiens (Human) protein is Zinc finger protein 22 (ZNF22).